Consider the following 170-residue polypeptide: Peptide deformylase (170 aa).

The Fe cation site is built by Cys-91 and His-133. The active site involves Glu-134. His-137 contacts Fe cation.

This sequence belongs to the polypeptide deformylase family. Fe(2+) serves as cofactor.

It carries out the reaction N-terminal N-formyl-L-methionyl-[peptide] + H2O = N-terminal L-methionyl-[peptide] + formate. In terms of biological role, removes the formyl group from the N-terminal Met of newly synthesized proteins. Requires at least a dipeptide for an efficient rate of reaction. N-terminal L-methionine is a prerequisite for activity but the enzyme has broad specificity at other positions. This chain is Peptide deformylase, found in Actinobacillus pleuropneumoniae serotype 7 (strain AP76).